Here is a 231-residue protein sequence, read N- to C-terminus: Lipoprotein-releasing system ATP-binding protein LolD (231 aa).

The ABC transporter domain occupies 11–231 (LRLEGLTRRF…TLRDGKLVPF (221 aa)). 47-54 (APSGTGKS) is an ATP binding site.

Belongs to the ABC transporter superfamily. Lipoprotein translocase (TC 3.A.1.125) family. The complex is composed of two ATP-binding proteins (LolD) and two transmembrane proteins (LolC and LolE).

The protein resides in the cell inner membrane. Functionally, part of the ABC transporter complex LolCDE involved in the translocation of mature outer membrane-directed lipoproteins, from the inner membrane to the periplasmic chaperone, LolA. Responsible for the formation of the LolA-lipoprotein complex in an ATP-dependent manner. This Gluconobacter oxydans (strain 621H) (Gluconobacter suboxydans) protein is Lipoprotein-releasing system ATP-binding protein LolD.